Reading from the N-terminus, the 492-residue chain is Serine incorporator 4 (492 aa).

10 consecutive transmembrane segments (helical) span residues 58-78 (FYIL…SKTV), 113-133 (AVYR…VLLV), 148-168 (SFWS…FCIP), 179-199 (IGIC…TAFA), 217-237 (FLGV…GAVL), 254-274 (LLSL…APCI), 281-301 (SGLL…FSAL), 330-350 (IPDA…VLFA), 421-441 (GFHF…TNWF), and 464-484 (VASC…PLLA).

The protein belongs to the TDE1 family.

It is found in the membrane. Functionally, incorporates a polar amino acid serine into membranes and facilitates the synthesis of two serine-derived lipids, phosphatidylserine and sphingolipids. The protein is Serine incorporator 4 (Serinc4) of Rattus norvegicus (Rat).